Here is a 199-residue protein sequence, read N- to C-terminus: Tropomyosin-1 (199 aa).

Residues 1-199 are a coiled coil; that stretch reads MDKIREKLSN…DEIAASLENL (199 aa). Residues K39 and K59 each participate in a glycyl lysine isopeptide (Lys-Gly) (interchain with G-Cter in ubiquitin) cross-link. Disordered stretches follow at residues 59–81 and 102–147; these read KLEAGLSDSKQTEQDNVEKENQI and LAES…TEKL. Composition is skewed to basic and acidic residues over residues 68–80 and 102–114; these read KQTEQDNVEKENQ and LAESKQLSEDSHH. Residues 115 to 126 are compositionally biased toward polar residues; sequence LQSNNDNFSKKN. Over residues 136-147 the composition is skewed to basic and acidic residues; the sequence is SDTKLKETTEKL. Residue K187 forms a Glycyl lysine isopeptide (Lys-Gly) (interchain with G-Cter in ubiquitin) linkage. S195 carries the post-translational modification Phosphoserine.

As to quaternary structure, homodimer.

It localises to the cytoplasm. The protein localises to the cytoskeleton. The protein is Tropomyosin-1 (TPM1) of Saccharomyces cerevisiae (strain ATCC 204508 / S288c) (Baker's yeast).